Consider the following 657-residue polypeptide: uncharacterized protein (657 aa).

Residues Ser518 and His631 each act as charge relay system in the active site.

The protein belongs to the peptidase S9C family.

This is an uncharacterized protein from Bacillus subtilis (strain 168).